We begin with the raw amino-acid sequence, 552 residues long: Dihydroxy-acid dehydratase (552 aa).

Asp-78 contacts Mg(2+). Cys-119 lines the [2Fe-2S] cluster pocket. Mg(2+) contacts are provided by Asp-120 and Lys-121. The residue at position 121 (Lys-121) is an N6-carboxylysine. Position 191 (Cys-191) interacts with [2Fe-2S] cluster. Glu-442 provides a ligand contact to Mg(2+). Ser-468 acts as the Proton acceptor in catalysis.

It belongs to the IlvD/Edd family. As to quaternary structure, homodimer. Requires [2Fe-2S] cluster as cofactor. The cofactor is Mg(2+).

It catalyses the reaction (2R)-2,3-dihydroxy-3-methylbutanoate = 3-methyl-2-oxobutanoate + H2O. It carries out the reaction (2R,3R)-2,3-dihydroxy-3-methylpentanoate = (S)-3-methyl-2-oxopentanoate + H2O. The protein operates within amino-acid biosynthesis; L-isoleucine biosynthesis; L-isoleucine from 2-oxobutanoate: step 3/4. It participates in amino-acid biosynthesis; L-valine biosynthesis; L-valine from pyruvate: step 3/4. In terms of biological role, functions in the biosynthesis of branched-chain amino acids. Catalyzes the dehydration of (2R,3R)-2,3-dihydroxy-3-methylpentanoate (2,3-dihydroxy-3-methylvalerate) into 2-oxo-3-methylpentanoate (2-oxo-3-methylvalerate) and of (2R)-2,3-dihydroxy-3-methylbutanoate (2,3-dihydroxyisovalerate) into 2-oxo-3-methylbutanoate (2-oxoisovalerate), the penultimate precursor to L-isoleucine and L-valine, respectively. The chain is Dihydroxy-acid dehydratase from Moorella thermoacetica (strain ATCC 39073 / JCM 9320).